The primary structure comprises 193 residues: Holliday junction branch migration complex subunit RuvA (193 aa).

The interval 1 to 63 (MIHHLKGQLI…EDSHTLYGFA (63 aa)) is domain I. A domain II region spans residues 64–142 (EKSEREIFRL…KVLGDDEVFV (79 aa)). The interval 143–145 (SQS) is flexible linker. A domain III region spans residues 145–193 (SNTNKEEALSALEILGYNRRQAGKVVEKILKEDPESTVESIIKMALKKL).

The protein belongs to the RuvA family. In terms of assembly, homotetramer. Forms an RuvA(8)-RuvB(12)-Holliday junction (HJ) complex. HJ DNA is sandwiched between 2 RuvA tetramers; dsDNA enters through RuvA and exits via RuvB. An RuvB hexamer assembles on each DNA strand where it exits the tetramer. Each RuvB hexamer is contacted by two RuvA subunits (via domain III) on 2 adjacent RuvB subunits; this complex drives branch migration. In the full resolvosome a probable DNA-RuvA(4)-RuvB(12)-RuvC(2) complex forms which resolves the HJ.

The protein resides in the cytoplasm. In terms of biological role, the RuvA-RuvB-RuvC complex processes Holliday junction (HJ) DNA during genetic recombination and DNA repair, while the RuvA-RuvB complex plays an important role in the rescue of blocked DNA replication forks via replication fork reversal (RFR). RuvA specifically binds to HJ cruciform DNA, conferring on it an open structure. The RuvB hexamer acts as an ATP-dependent pump, pulling dsDNA into and through the RuvAB complex. HJ branch migration allows RuvC to scan DNA until it finds its consensus sequence, where it cleaves and resolves the cruciform DNA. The chain is Holliday junction branch migration complex subunit RuvA from Christiangramia forsetii (strain DSM 17595 / CGMCC 1.15422 / KT0803) (Gramella forsetii).